Here is a 132-residue protein sequence, read N- to C-terminus: Phosphomevalonate dehydratase small subunit (132 aa).

S58 (proton acceptor) is an active-site residue.

It belongs to the AcnX type II small subunit family. Heterodimer composed of a large subunit (PMDh-L) and a small subunit (PMDh-S).

It carries out the reaction (R)-5-phosphomevalonate = (2E)-3-methyl-5-phosphooxypent-2-enoate + H2O. It functions in the pathway isoprenoid biosynthesis; isopentenyl diphosphate biosynthesis via mevalonate pathway. Its activity is regulated as follows. Neither the addition of 1 mM Mg(2+) nor 1 mM Mn(2+) has a significant effect on the activity, whereas Zn(2+) causes almost complete inactivation. Strongly inhibited by H(2)O(2), but not by EDTA or iodoacetamide. In terms of biological role, component of a hydro-lyase that catalyzes the dehydration of mevalonate 5-phosphate (MVA5P) to form trans-anhydromevalonate 5-phosphate (tAHMP). Involved in the archaeal mevalonate (MVA) pathway, which provides fundamental precursors for isoprenoid biosynthesis, such as isopentenyl diphosphate (IPP) and dimethylallyl diphosphate (DMAPP). The sequence is that of Phosphomevalonate dehydratase small subunit from Aeropyrum pernix (strain ATCC 700893 / DSM 11879 / JCM 9820 / NBRC 100138 / K1).